The chain runs to 295 residues: MTNSSYIGRFAPTPSGFLHFGSLVAALASWLDARAVNGRWLLRMEDTDPPREMPGARDAILQTLERYGLEWDGEVVFQSQRHDAYAAVVDRLFNMGLAYACICSRKQLEGYNGIYPGLCRNAGHAREGAAIRLRVPELIYRFTDRVQGEYQQHLGREVGDFVIQRRDGLYAYQLAVVLDDAWQGVTDIVRGADLLDNTPRQLYLQELLGFSQPRYLHIPLIVQPDGHKLGKSYRSPPLQVEHATPLLLRALRALGQDTDPELLVATPAEVLAVARKQWRPEAIAQKTTVPEADLR.

L-glutamate contacts are provided by residues 9–13 and E45; that span reads RFAPT. The 'HIGH' region motif lies at 12–22; the sequence is PTPSGFLHFGS. C101, C103, Y115, and C119 together coordinate Zn(2+). L-glutamate-binding residues include Y172 and R190. Positions 228-232 match the 'KMSKS' region motif; that stretch reads KLGKS. K231 contributes to the ATP binding site.

The protein belongs to the class-I aminoacyl-tRNA synthetase family. GluQ subfamily. It depends on Zn(2+) as a cofactor.

Catalyzes the tRNA-independent activation of glutamate in presence of ATP and the subsequent transfer of glutamate onto a tRNA(Asp). Glutamate is transferred on the 2-amino-5-(4,5-dihydroxy-2-cyclopenten-1-yl) moiety of the queuosine in the wobble position of the QUC anticodon. The chain is Glutamyl-Q tRNA(Asp) synthetase from Pseudomonas putida (strain GB-1).